An 80-amino-acid chain; its full sequence is Exodeoxyribonuclease 7 small subunit (80 aa).

The protein belongs to the XseB family. Heterooligomer composed of large and small subunits.

It localises to the cytoplasm. The enzyme catalyses Exonucleolytic cleavage in either 5'- to 3'- or 3'- to 5'-direction to yield nucleoside 5'-phosphates.. In terms of biological role, bidirectionally degrades single-stranded DNA into large acid-insoluble oligonucleotides, which are then degraded further into small acid-soluble oligonucleotides. The protein is Exodeoxyribonuclease 7 small subunit of Pseudomonas putida (strain GB-1).